A 418-amino-acid chain; its full sequence is Serpin A9 (418 aa).

Residues 1-25 (MGSSSFYRVLLLVGFCAPIFCMLSS) form the signal peptide. N-linked (GlcNAc...) asparagine glycans are attached at residues asparagine 103, asparagine 213, and asparagine 224.

It belongs to the serpin family.

It localises to the secreted. This chain is Serpin A9 (Serpina9), found in Mus musculus (Mouse).